The chain runs to 193 residues: Holliday junction branch migration complex subunit RuvA (193 aa).

Residues 1–64 form a domain I region; that stretch reads MIGRIAGILL…EDAHLLYGFL (64 aa). The domain II stretch occupies residues 65 to 139; it reads TPQERTTFRE…GKLGADLGAL (75 aa). Positions 139–143 are flexible linker; it reads LAGAA. A domain III region spans residues 144 to 193; it reads SASDHATDILNALLALGYSEKEGLAAIKNVPAGTGVSEGIKLALKALSKA.

It belongs to the RuvA family. As to quaternary structure, homotetramer. Forms an RuvA(8)-RuvB(12)-Holliday junction (HJ) complex. HJ DNA is sandwiched between 2 RuvA tetramers; dsDNA enters through RuvA and exits via RuvB. An RuvB hexamer assembles on each DNA strand where it exits the tetramer. Each RuvB hexamer is contacted by two RuvA subunits (via domain III) on 2 adjacent RuvB subunits; this complex drives branch migration. In the full resolvosome a probable DNA-RuvA(4)-RuvB(12)-RuvC(2) complex forms which resolves the HJ.

It is found in the cytoplasm. Its function is as follows. The RuvA-RuvB-RuvC complex processes Holliday junction (HJ) DNA during genetic recombination and DNA repair, while the RuvA-RuvB complex plays an important role in the rescue of blocked DNA replication forks via replication fork reversal (RFR). RuvA specifically binds to HJ cruciform DNA, conferring on it an open structure. The RuvB hexamer acts as an ATP-dependent pump, pulling dsDNA into and through the RuvAB complex. HJ branch migration allows RuvC to scan DNA until it finds its consensus sequence, where it cleaves and resolves the cruciform DNA. This chain is Holliday junction branch migration complex subunit RuvA, found in Burkholderia cenocepacia (strain HI2424).